Consider the following 194-residue polypeptide: Ion-translocating oxidoreductase complex subunit B (194 aa).

The segment at 1-26 (MSSILIAVIAISALALVFGLILGFAS) is hydrophobic. The 59-residue stretch at 32–90 (ESDPIVDQIDSILPQTQCGQCGYPGCKPYAEAIANGDTINKCPPGGQATIEKLADLMGV) folds into the 4Fe-4S domain. Residues Cys-49, Cys-52, Cys-57, Cys-73, Cys-114, Cys-117, Cys-120, Cys-124, Cys-144, Cys-147, Cys-150, and Cys-154 each contribute to the [4Fe-4S] cluster site. 4Fe-4S ferredoxin-type domains follow at residues 105 to 134 (KIAF…GGTK) and 135 to 164 (ALHT…MIPV).

The protein belongs to the 4Fe4S bacterial-type ferredoxin family. RnfB subfamily. As to quaternary structure, the complex is composed of six subunits: RnfA, RnfB, RnfC, RnfD, RnfE and RnfG. The cofactor is [4Fe-4S] cluster.

Its subcellular location is the cell inner membrane. Its function is as follows. Part of a membrane-bound complex that couples electron transfer with translocation of ions across the membrane. In Aliivibrio salmonicida (strain LFI1238) (Vibrio salmonicida (strain LFI1238)), this protein is Ion-translocating oxidoreductase complex subunit B.